The following is a 172-amino-acid chain: GTP-dependent dephospho-CoA kinase (172 aa).

GTP contacts are provided by aspartate 49, valine 50, valine 51, aspartate 68, lysine 70, and glutamate 120.

The protein belongs to the GTP-dependent DPCK family.

The enzyme catalyses 3'-dephospho-CoA + GTP = GDP + CoA + H(+). Its pathway is cofactor biosynthesis; coenzyme A biosynthesis. Its function is as follows. Catalyzes the GTP-dependent phosphorylation of the 3'-hydroxyl group of dephosphocoenzyme A to form coenzyme A (CoA). The chain is GTP-dependent dephospho-CoA kinase from Pyrobaculum arsenaticum (strain DSM 13514 / JCM 11321 / PZ6).